The following is a 492-amino-acid chain: Trehalose-phosphatase (492 aa).

Positions 1–55 (MTETVTDQGKQRSSKLQKNEAAKDEQVEGKGKETLESGTDKSAEQNSSLLVGQPD) are disordered. A compositionally biased stretch (basic and acidic residues) spans 17–43 (QKNEAAKDEQVEGKGKETLESGTDKSA). 2 residues coordinate Mg(2+): aspartate 213 and aspartate 215. The Proton donor/acceptor role is filled by aspartate 215. 332-334 (QRK) is a substrate binding site. Aspartate 424 contacts Mg(2+).

This sequence belongs to the gob-1 trehalose phosphatase family. The cofactor is Mg(2+).

It carries out the reaction alpha,alpha-trehalose 6-phosphate + H2O = alpha,alpha-trehalose + phosphate. Inhibited by trehalose 6-sulfate. In terms of biological role, catalyzes the hydrolysis of trehalose 6-phosphate to trehalose and phosphate; prevents the accumulation of toxic levels of trehalose 6-phosphate. The sequence is that of Trehalose-phosphatase from Brugia malayi (Filarial nematode worm).